Reading from the N-terminus, the 91-residue chain is LYR motif-containing protein 4 (91 aa).

Pantetheine 4'-phosphate is bound by residues Arg6 and Lys44. Lys47 is subject to N6-succinyllysine.

It belongs to the complex I LYR family. In terms of assembly, homodimer. Component of the mitochondrial core iron-sulfur cluster (ISC) complex composed of NFS1, LYRM4, NDUFAB1, ISCU, FXN, and FDX2; this complex is a heterohexamer containing two copies of each monomer. Component of the cyteine desulfurase complex composed of NFS1, LYRM4 and NDUFAB1; this complex contributes to the stability and cysteine desulfurase activity of NFS1. Interacts with FXN; this interaction is nickel-dependent. Interacts with the cytoplasmic form of NFS1; the complex increases the stability of NFS1. Forms a complex with the cytoplasmic form of NFS1; this complex increases the stability and cysteine desulfurase activity of NFS1. Interacts with NFS1.

Its subcellular location is the mitochondrion. It is found in the nucleus. Its pathway is cofactor biosynthesis; iron-sulfur cluster biosynthesis. Stabilizing factor, of the core iron-sulfur cluster (ISC) assembly complex, that regulates, in association with NDUFAB1, the stability and the cysteine desulfurase activity of NFS1 and participates in the [2Fe-2S] clusters assembly on the scaffolding protein ISCU. The core iron-sulfur cluster (ISC) assembly complex is involved in the de novo synthesis of a [2Fe-2S] cluster, the first step of the mitochondrial iron-sulfur protein biogenesis. This process is initiated by the cysteine desulfurase complex (NFS1:LYRM4:NDUFAB1) that produces persulfide which is delivered on the scaffold protein ISCU in a FXN-dependent manner. Then this complex is stabilized by FDX2 which provides reducing equivalents to accomplish the [2Fe-2S] cluster assembly. Finally, the [2Fe-2S] cluster is transferred from ISCU to chaperone proteins, including HSCB, HSPA9 and GLRX5. May also participates in the iron-sulfur protein biogenesis in the cytoplasm through its interaction with the cytoplasmic form of NFS1. The chain is LYR motif-containing protein 4 from Bos taurus (Bovine).